The sequence spans 821 residues: Elongator complex protein 2 (821 aa).

WD repeat units lie at residues Gly56–Ser100, Gly105–Leu152, Gly160–Met200, Gly205–Glu246, Gly280–Leu328, Gly338–Trp377, Gly385–Gln424, Ile435–Phe473, Gly563–Ser607, Tyr610–Phe649, Val665–Met704, Asp716–Lys760, and Ser773–Leu821.

It belongs to the WD repeat ELP2 family. As to quaternary structure, component of the elongator complex which consists of ELP1, ELP2, ELP3, ELP4, ELP5 and ELP6. Interacts with STAT3 and JAKs.

Its subcellular location is the cytoplasm. The protein resides in the nucleus. It participates in tRNA modification; 5-methoxycarbonylmethyl-2-thiouridine-tRNA biosynthesis. In terms of biological role, component of the elongator complex which is required for multiple tRNA modifications, including mcm5U (5-methoxycarbonylmethyl uridine), mcm5s2U (5-methoxycarbonylmethyl-2-thiouridine), and ncm5U (5-carbamoylmethyl uridine). The elongator complex catalyzes the formation of carboxymethyluridine in the wobble base at position 34 in tRNAs. This is Elongator complex protein 2 (Elp2) from Rattus norvegicus (Rat).